The following is a 1138-amino-acid chain: Transmembrane channel-like protein 3 (1138 aa).

Residues 1–15 (MEAAPGTAAAAAKPA) are compositionally biased toward low complexity. 2 disordered regions span residues 1 to 20 (MEAA…SCKK) and 29 to 54 (NIYT…DSQD). The Cytoplasmic portion of the chain corresponds to 1 to 155 (MEAAPGTAAA…VASYFIFLRW (155 aa)). A helical transmembrane segment spans residues 156–176 (LFGINIVLTIMTGAFVVLPEL). The Extracellular segment spans residues 177–202 (LAGAPFGSTVSKTIRQEDLKTAQDLD). A helical membrane pass occupies residues 203 to 223 (TIWSLGGYLQYSVLFYGYYGS). The Cytoplasmic segment spans residues 224 to 233 (DRKIGKAGYR). The chain crosses the membrane as a helical span at residues 234-254 (LPLAYFLVGMAVFAYSFIILL). At 255 to 327 (KKMAKNSRMS…KNLAVTISLR (73 aa)) the chain is on the extracellular side. N-linked (GlcNAc...) asparagine glycosylation occurs at asparagine 272. A helical membrane pass occupies residues 328 to 348 (IIANILVLLSLTGSIYIIYFV). Topologically, residues 349-369 (VDRSQKLENNKRELTLWEKNE) are cytoplasmic. Residues 370-390 (VSVVVSLITMIAPSAFELVAA) form a helical membrane-spanning segment. Residues 391–401 (LEMYHPRTTLR) are Extracellular-facing. Residues 402–422 (FQLARVLVLYLGNLYSLIIAL) traverse the membrane as a helical segment. At 423–508 (LDKVNSMSVT…CWETYVGQEM (86 aa)) the chain is on the cytoplasmic side. Residues 509 to 529 (LKLSIIDMIFTVASILLIDFF) traverse the membrane as a helical segment. At 530–569 (RGLCVRYLSDCWCWDLESKFPEYGEFKIAENVLHLVYNQG) the chain is on the extracellular side. Residues 570–590 (MIWMGAFFSPCLPAFNVLKLI) form a helical membrane-spanning segment. Topologically, residues 591 to 618 (GLMYLRSWAVLTCNVPHQQVFRASRSNN) are cytoplasmic. A helical membrane pass occupies residues 619 to 639 (FYLAMLLFMLFLCMLPTIFAI). Residues 640-676 (ARYKPSLSCGPFSGQEKIYDIVSETIQNDFPAWFNSV) lie on the Extracellular side of the membrane. Residues 677-697 (IAYISSPVVVLPALLLLFMLI) traverse the membrane as a helical segment. The Cytoplasmic segment spans residues 698–1138 (YYLQSIARSL…EPNELVCSNV (441 aa)). Polar residues predominate over residues 753–763 (NSEGTRFQSLD). Disordered regions lie at residues 753–859 (NSEG…RYPS), 973–1005 (SPHP…DLRP), and 1065–1095 (PKTK…SSND). The span at 764–773 (GSDKRPDKDG) shows a compositional bias: basic and acidic residues. Composition is skewed to polar residues over residues 777-795 (SQES…SVLN) and 804-813 (TRIQTISQTV). Positions 828 to 845 (TTPTTSASLTPAPSVSSA) are enriched in low complexity. The span at 989–998 (HYVKRSHRPR) shows a compositional bias: basic residues. Low complexity predominate over residues 1074-1095 (SLTESDSVSIESSSDPQNSSND).

It belongs to the TMC family. In terms of tissue distribution, expressed in a range of tissues including cerebrum, cerebellum, retina, cochlea, lung, liver and heart. Also expressed in the apical, medial and basal portions of the basillar papilla.

Its subcellular location is the membrane. Probable component of an ion channel. In Gallus gallus (Chicken), this protein is Transmembrane channel-like protein 3.